A 198-amino-acid polypeptide reads, in one-letter code: Adenylyl-sulfate kinase (198 aa).

Gly-31–Ser-38 is a binding site for ATP. Ser-105 acts as the Phosphoserine intermediate in catalysis.

Belongs to the APS kinase family.

The catalysed reaction is adenosine 5'-phosphosulfate + ATP = 3'-phosphoadenylyl sulfate + ADP + H(+). It functions in the pathway sulfur metabolism; hydrogen sulfide biosynthesis; sulfite from sulfate: step 2/3. Functionally, catalyzes the synthesis of activated sulfate. This chain is Adenylyl-sulfate kinase, found in Shewanella amazonensis (strain ATCC BAA-1098 / SB2B).